Reading from the N-terminus, the 195-residue chain is MIFFSILITIFAYFLGSISSAILICKILRFPDPRNFGSKNPGATNILRIAGLKIAISVILFDILKGAIPMWLGYHLKISPIFLGATAVFSCLGHMYPIFFKFYGGKGVATAFGVLTTIDLHLSIVMISSWTLTVLSFGYSSLGAIVTAFIIPCYAWHFQSQYLLPTIIISSLVVIKHAANIKRLWHHKENRIWRK.

6 consecutive transmembrane segments (helical) span residues 2–22 (IFFSILITIFAYFLGSISSAI), 54–74 (IAISVILFDILKGAIPMWLGY), 80–100 (PIFLGATAVFSCLGHMYPIFF), 107–127 (GVATAFGVLTTIDLHLSIVMI), 132–152 (LTVLSFGYSSLGAIVTAFIIP), and 155–175 (AWHFQSQYLLPTIIISSLVVI).

The protein belongs to the PlsY family. As to quaternary structure, probably interacts with PlsX.

The protein resides in the cell inner membrane. It catalyses the reaction an acyl phosphate + sn-glycerol 3-phosphate = a 1-acyl-sn-glycero-3-phosphate + phosphate. The protein operates within lipid metabolism; phospholipid metabolism. In terms of biological role, catalyzes the transfer of an acyl group from acyl-phosphate (acyl-PO(4)) to glycerol-3-phosphate (G3P) to form lysophosphatidic acid (LPA). This enzyme utilizes acyl-phosphate as fatty acyl donor, but not acyl-CoA or acyl-ACP. The chain is Glycerol-3-phosphate acyltransferase from Blochmanniella pennsylvanica (strain BPEN).